Reading from the N-terminus, the 134-residue chain is Large ribosomal subunit protein uL16c (134 aa).

It belongs to the universal ribosomal protein uL16 family. As to quaternary structure, part of the 50S ribosomal subunit.

It localises to the plastid. The protein resides in the chloroplast. The chain is Large ribosomal subunit protein uL16c from Solanum lycopersicum (Tomato).